Consider the following 287-residue polypeptide: 4-hydroxybenzoate octaprenyltransferase (287 aa).

A run of 7 helical transmembrane segments spans residues 23–40 (IGSL…WLAG), 99–119 (LFVV…TMTI), 141–161 (LPQF…YAAV), 163–183 (ESLP…TVAY), 213–233 (LIIG…GTMT), 235–255 (LGMP…YQQI), and 266–286 (FKAF…VLFG).

Belongs to the UbiA prenyltransferase family. Requires Mg(2+) as cofactor.

Its subcellular location is the cell inner membrane. It carries out the reaction all-trans-octaprenyl diphosphate + 4-hydroxybenzoate = 4-hydroxy-3-(all-trans-octaprenyl)benzoate + diphosphate. The protein operates within cofactor biosynthesis; ubiquinone biosynthesis. Its function is as follows. Catalyzes the prenylation of para-hydroxybenzoate (PHB) with an all-trans polyprenyl group. Mediates the second step in the final reaction sequence of ubiquinone-8 (UQ-8) biosynthesis, which is the condensation of the polyisoprenoid side chain with PHB, generating the first membrane-bound Q intermediate 3-octaprenyl-4-hydroxybenzoate. The sequence is that of 4-hydroxybenzoate octaprenyltransferase from Pectobacterium carotovorum subsp. carotovorum (strain PC1).